A 1579-amino-acid chain; its full sequence is MAP kinase kinase kinase SSK2 (1579 aa).

Residues 1 to 70 (MSHSDYFNYK…HSTQYFRSPN (70 aa)) form a disordered region. The span at 21 to 44 (SSKMRQSSSSSSSRLRSESLGRNS) shows a compositional bias: low complexity. The segment covering 45-67 (NTTQARVASSPISPGLHSTQYFR) has biased composition (polar residues). A phosphoserine mark is found at serine 57, serine 62, serine 78, and serine 118. Disordered regions lie at residues 97-155 (FFHQ…ESEI) and 190-243 (SIMS…GSTT). Over residues 104–118 (SGSSSSSARSSRRPS) the composition is skewed to low complexity. Polar residues predominate over residues 127 to 139 (NPQQSLPKLSTQP). The span at 144 to 155 (KKVEASKTESEI) shows a compositional bias: basic and acidic residues. Position 290 is a phosphoserine (serine 290). The 293-residue stretch at 1266-1558 (WQKRNFIGGG…AVELLMDPWI (293 aa)) folds into the Protein kinase domain. ATP-binding positions include 1272–1280 (IGGGTFGRV) and lysine 1295. The active-site Proton acceptor is aspartate 1390. A Phosphoserine modification is found at serine 1424.

The protein belongs to the protein kinase superfamily. STE Ser/Thr protein kinase family. MAP kinase kinase kinase subfamily. In terms of assembly, interacts with by SSK1.

It carries out the reaction L-seryl-[protein] + ATP = O-phospho-L-seryl-[protein] + ADP + H(+). It catalyses the reaction L-threonyl-[protein] + ATP = O-phospho-L-threonyl-[protein] + ADP + H(+). Kinase involved in a signal transduction pathway that is activated by changes in the osmolarity of the extracellular environment. Activates the PBS2 MAP kinase kinase by phosphorylation. The protein is MAP kinase kinase kinase SSK2 (SSK2) of Saccharomyces cerevisiae (strain ATCC 204508 / S288c) (Baker's yeast).